The sequence spans 875 residues: Metal transporter CNNM2 (875 aa).

Topologically, residues 1–250 (MIGCGACEPE…TKMIVGEEKK (250 aa)) are extracellular. A glycan (N-linked (GlcNAc...) asparagine) is linked at N112. Positions 122–148 (EHERRRHTPGERGLGGPAPPEPDSGPQ) are disordered. The helical transmembrane segment at 251–271 (FLLPFWLQVIFISLLLCLSGM) threads the bilayer. The region spanning 251 to 431 (FLLPFWLQVI…DPYNDLVKEE (181 aa)) is the CNNM transmembrane domain. The Cytoplasmic segment spans residues 272 to 313 (FSGLNLGLMALDPMELRIVQNCGTEKEKNYAKRIEPVRRQGN). Residues 314-334 (YLLCSLLLGNVLVNTTLTILL) constitute an intramembrane region (helical). Topologically, residues 335 to 338 (DDIA) are cytoplasmic. The chain crosses the membrane as a helical span at residues 339–359 (GSGLVAVVVSTIGIVIFGEIV). Topologically, residues 360 to 368 (PQAICSRHG) are extracellular. The chain crosses the membrane as a helical span at residues 369-389 (LAVGANTIFLTKFFMMMTFPA). Residues 390-875 (SYPVSKLLDC…NHSLHSEGAI (486 aa)) lie on the Cytoplasmic side of the membrane. 2 CBS domains span residues 450–511 (MTPL…CTPL) and 518–584 (YNHP…ILDE). Residues 741-763 (AGSPGENKSPPRPCGLNHSDSLS) form a disordered region. S761 bears the Phosphoserine mark.

This sequence belongs to the ACDP family.

It is found in the cell membrane. Divalent metal cation transporter. Mediates transport of divalent metal cations in an order of Mg(2+) &gt; Co(2+) &gt; Mn(2+) &gt; Sr(2+) &gt; Ba(2+) &gt; Cu(2+) &gt; Fe(2+). In Rattus norvegicus (Rat), this protein is Metal transporter CNNM2 (Cnnm2).